The primary structure comprises 150 residues: Profilin (150 aa).

This sequence belongs to the profilin family. In terms of assembly, occurs in many kinds of cells as a complex with monomeric actin in a 1:1 ratio.

Its subcellular location is the cytoplasm. The protein localises to the cytoskeleton. Functionally, binds to actin and affects the structure of the cytoskeleton. At high concentrations, profilin prevents the polymerization of actin, whereas it enhances it at low concentrations. By binding to PIP2, it inhibits the formation of IP3 and DG. In Trypanosoma brucei brucei, this protein is Profilin.